The primary structure comprises 635 residues: Threonine--tRNA ligase (635 aa).

The TGS domain occupies 1 to 61; it reads MIKITLKDGS…ENDCTLNLLT (61 aa). Residues 242–532 are catalytic; sequence DHRKLGRELD…LTEHYAGAFP (291 aa). The Zn(2+) site is built by cysteine 333, histidine 384, and histidine 509.

It belongs to the class-II aminoacyl-tRNA synthetase family. Homodimer. Zn(2+) is required as a cofactor.

The protein localises to the cytoplasm. It catalyses the reaction tRNA(Thr) + L-threonine + ATP = L-threonyl-tRNA(Thr) + AMP + diphosphate + H(+). Its function is as follows. Catalyzes the attachment of threonine to tRNA(Thr) in a two-step reaction: L-threonine is first activated by ATP to form Thr-AMP and then transferred to the acceptor end of tRNA(Thr). Also edits incorrectly charged L-seryl-tRNA(Thr). The protein is Threonine--tRNA ligase of Acetivibrio thermocellus (strain ATCC 27405 / DSM 1237 / JCM 9322 / NBRC 103400 / NCIMB 10682 / NRRL B-4536 / VPI 7372) (Clostridium thermocellum).